The chain runs to 1048 residues: 3-hydroxy-3-methylglutaryl-coenzyme A reductase (1048 aa).

The Cytoplasmic portion of the chain corresponds to 1–32; that stretch reads MDPVVRKPDPGGVQHRVTKALRAIVGHACRHP. A helical membrane pass occupies residues 33–53; the sequence is IHTLLVTALTAATTHLHVLEG. Residues 54–220 lie on the Lumenal side of the membrane; it reads TYQATHRGLA…FLHRVHHAET (167 aa). A helical transmembrane segment spans residues 221-241; it reads VDLVIIGLSYLAMNMTVVSLF. The SSD domain occupies 222 to 403; the sequence is DLVIIGLSYL…FTFYATILCV (182 aa). Over 242-250 the chain is Cytoplasmic; sequence RVMRHLGSR. The chain crosses the membrane as a helical span at residues 251-271; sequence FWLAASVLLSGAFAFVLGLGI. Over 272–276 the chain is Lumenal; the sequence is TTTCD. The helical transmembrane segment at 277-297 threads the bilayer; that stretch reads VPVDMLLLFEGIPYLVLTVGF. Residues 298–348 lie on the Cytoplasmic side of the membrane; that stretch reads EKPIQLTRAVLCVSEELWGGGQRQVPNGASSDDSRQNQLIPNIIQLAVDRE. A helical membrane pass occupies residues 349 to 369; that stretch reads GWYIVRSYLLEIGALALGAVL. The Lumenal portion of the chain corresponds to 370–377; the sequence is RPKDSLGH. A helical membrane pass occupies residues 378–398; sequence FCFLAAWTLLIDAVLLFTFYA. Topologically, residues 399 to 439 are cytoplasmic; sequence TILCVKLEITRIRSPGGLGQVNAKHPSGIFGHKVKSTNITW. A helical membrane pass occupies residues 440–460; the sequence is WKLLTVGGFVLCHFLQLSPFF. At 461 to 542 the chain is on the lumenal side; it reads YRVMGEYMAN…LDGLESPLGR (82 aa). Asn470 and Asn520 each carry an N-linked (GlcNAc...) asparagine glycan. A helical membrane pass occupies residues 543 to 563; sequence LCLMGALVVSLVLNNHLIHAA. Over 564–1048 the chain is Cytoplasmic; the sequence is RWHAWPQARE…NRSAGATVKK (485 aa). Glu729 functions as the Charge relay system in the catalytic mechanism. A CoA-binding site is contributed by 735–741; the sequence is SASRGCK. NADP(+) is bound by residues 796–798 and 823–831; these read SRF and DAMGMNMIS. Lys863 acts as the Charge relay system in catalysis. Residue 892 to 894 participates in CoA binding; it reads VLK. The active-site Charge relay system is the Asp939. Residue 1034–1035 coordinates CoA; it reads AH. His1035 functions as the Proton donor in the catalytic mechanism. 1039-1040 provides a ligand contact to NADP(+); the sequence is NR.

The protein belongs to the HMG-CoA reductase family.

It localises to the endoplasmic reticulum membrane. The catalysed reaction is (R)-mevalonate + 2 NADP(+) + CoA = (3S)-3-hydroxy-3-methylglutaryl-CoA + 2 NADPH + 2 H(+). It functions in the pathway metabolic intermediate biosynthesis; (R)-mevalonate biosynthesis; (R)-mevalonate from acetyl-CoA: step 3/3. HMG-CoA reductase; part of the first module of ergosterol biosynthesis pathway that includes the early steps of the pathway, conserved across all eukaryotes, and which results in the formation of mevalonate from acetyl-coenzyme A (acetyl-CoA). In this module, the cytosolic acetyl-CoA acetyltransferase catalyzes the formation of acetoacetyl-CoA. The hydroxymethylglutaryl-CoA synthase then condenses acetyl-CoA with acetoacetyl-CoA to form HMG-CoA. The rate-limiting step of the early module is the reduction to mevalonate by the 3-hydroxy-3-methylglutaryl-coenzyme A (HMG-CoA) reductase. The sequence is that of 3-hydroxy-3-methylglutaryl-coenzyme A reductase from Aspergillus terreus.